The sequence spans 118 residues: Holo-[acyl-carrier-protein] synthase (118 aa).

Mg(2+)-binding residues include Asp8 and Glu58.

The protein belongs to the P-Pant transferase superfamily. AcpS family. The cofactor is Mg(2+).

It localises to the cytoplasm. It catalyses the reaction apo-[ACP] + CoA = holo-[ACP] + adenosine 3',5'-bisphosphate + H(+). Transfers the 4'-phosphopantetheine moiety from coenzyme A to a Ser of acyl-carrier-protein. The protein is Holo-[acyl-carrier-protein] synthase of Streptococcus uberis (strain ATCC BAA-854 / 0140J).